Here is a 558-residue protein sequence, read N- to C-terminus: Galactoside 2-alpha-L-fucosyltransferase (558 aa).

At 1 to 43 (MDQNSYRRRSSPIRTTTGGSKSVNFSELLQMKYLSSGTMKLTR) the chain is on the cytoplasmic side. The chain crosses the membrane as a helical; Signal-anchor for type II membrane protein span at residues 44-64 (TFTTCLIVFSVLVAFSMIFHQ). Residues 65–558 (HPSDSNRIMG…EDISWGLKLV (494 aa)) lie on the Lumenal side of the membrane. N-linked (GlcNAc...) asparagine glycans are attached at residues N88 and N504.

The protein belongs to the glycosyltransferase 37 family. In terms of assembly, homodimer. Interacts with MUR3, XLT2, XXT2 and XXT5. In terms of tissue distribution, expressed in roots, stems, leaves, flowers, siliques and seedlings.

Its subcellular location is the golgi apparatus. It is found in the golgi stack membrane. It localises to the golgi apparatus membrane. Involved in cell wall biosynthesis. Is both necessary and sufficient for the addition of the terminal fucosyl residue on xyloglucan side chains, but is not involved in the fucosylation of other cell wall components. Associates with other xyloglucan-synthesizing enzymes to form multiprotein complexes for xyloglucan synthesis in the Golgi. The sequence is that of Galactoside 2-alpha-L-fucosyltransferase (FUT1) from Arabidopsis thaliana (Mouse-ear cress).